Here is a 170-residue protein sequence, read N- to C-terminus: Ribulose bisphosphate carboxylase small subunit, chloroplastic (170 aa).

2 consecutive transit peptides (chloroplast) follow at residues 1–46 (MAPT…GRIR) and 1–47 (MAPT…RIRC).

Belongs to the RuBisCO small chain family. As to quaternary structure, heterohexadecamer of 8 large and 8 small subunits.

The protein resides in the plastid. It is found in the chloroplast. In terms of biological role, ruBisCO catalyzes two reactions: the carboxylation of D-ribulose 1,5-bisphosphate, the primary event in carbon dioxide fixation, as well as the oxidative fragmentation of the pentose substrate. Both reactions occur simultaneously and in competition at the same active site. Although the small subunit is not catalytic it is essential for maximal activity. This Zea mays (Maize) protein is Ribulose bisphosphate carboxylase small subunit, chloroplastic.